Here is a 419-residue protein sequence, read N- to C-terminus: Gamma-glutamyl phosphate reductase (419 aa).

It belongs to the gamma-glutamyl phosphate reductase family.

It localises to the cytoplasm. The catalysed reaction is L-glutamate 5-semialdehyde + phosphate + NADP(+) = L-glutamyl 5-phosphate + NADPH + H(+). Its pathway is amino-acid biosynthesis; L-proline biosynthesis; L-glutamate 5-semialdehyde from L-glutamate: step 2/2. Catalyzes the NADPH-dependent reduction of L-glutamate 5-phosphate into L-glutamate 5-semialdehyde and phosphate. The product spontaneously undergoes cyclization to form 1-pyrroline-5-carboxylate. This Bordetella bronchiseptica (strain ATCC BAA-588 / NCTC 13252 / RB50) (Alcaligenes bronchisepticus) protein is Gamma-glutamyl phosphate reductase.